A 267-amino-acid chain; its full sequence is Probable ribose-5-phosphate isomerase 1 (267 aa).

G2 bears the N-acetylglycine mark. At S92 the chain carries Phosphoserine.

This sequence belongs to the ribose 5-phosphate isomerase family. Expressed in roots, cotyledons, leaves and flowers.

It localises to the cytoplasm. The enzyme catalyses aldehydo-D-ribose 5-phosphate = D-ribulose 5-phosphate. The protein operates within carbohydrate degradation; pentose phosphate pathway; D-ribose 5-phosphate from D-ribulose 5-phosphate (non-oxidative stage): step 1/1. Functionally, catalyzes the reversible conversion of ribose-5-phosphate to ribulose 5-phosphate. This is Probable ribose-5-phosphate isomerase 1 (RPI1) from Arabidopsis thaliana (Mouse-ear cress).